Consider the following 682-residue polypeptide: Nephrocystin-1-like protein (682 aa).

Positions 10–100 form a coiled coil; that stretch reads LQDAINRFPQ…ALSPEKEQLS (91 aa). Residues 96 to 188 form a disordered region; that stretch reads KEQLSFSVSV…PLESKTLNER (93 aa). Residues 128–148 show a composition bias toward acidic residues; that stretch reads NDDESEDSDNDSEIIETDVQL. The SH3 domain maps to 215–275; the sequence is VRGNVFVAID…PKTYLQHVKE (61 aa).

Belongs to the nephrocystin-1 family. As to expression, expressed in ciliated sensory neurons of the head (amphid neurons) and the tail in hermaphrodites (phasmid neurons) and males (sensory ray neurons).

In terms of biological role, plays a role in the extension of dendrites from phasmid ciliated sensory neurons. May be necessary for initial assembly of the cilium. This is Nephrocystin-1-like protein from Caenorhabditis elegans.